Consider the following 1422-residue polypeptide: DNA-directed RNA polymerase subunit beta (1422 aa).

Residues 1392-1422 (QAAREAAERDLGGGPLGAPRGAVASGEKSSA) are disordered.

It belongs to the RNA polymerase beta chain family. As to quaternary structure, the RNAP catalytic core consists of 2 alpha, 1 beta, 1 beta' and 1 omega subunit. When a sigma factor is associated with the core the holoenzyme is formed, which can initiate transcription.

It carries out the reaction RNA(n) + a ribonucleoside 5'-triphosphate = RNA(n+1) + diphosphate. DNA-dependent RNA polymerase catalyzes the transcription of DNA into RNA using the four ribonucleoside triphosphates as substrates. The protein is DNA-directed RNA polymerase subunit beta of Anaeromyxobacter dehalogenans (strain 2CP-1 / ATCC BAA-258).